The chain runs to 315 residues: Leukocidin-S subunit (315 aa).

Positions 1 to 29 (MLKNKILATTLSVSLLAPLANPLLENAKA) are cleaved as a signal peptide.

The protein belongs to the aerolysin family. In terms of assembly, leukocidin consists of two protein components: F and S.

Its function is as follows. Leukocidin causes cytotoxic changes in polymorphonuclear leukocytes. This Staphylococcus aureus protein is Leukocidin-S subunit (lukS).